The primary structure comprises 910 residues: Eukaryotic translation initiation factor 3 subunit C (910 aa).

Residues 1-21 form a disordered region; the sequence is MSRFFANGSDSESESSEDEIQ. Positions 11 to 20 are enriched in acidic residues; it reads SESESSEDEI. Phosphoserine occurs at positions 34, 165, 176, and 185. The segment at 157-281 is disordered; sequence FREAPDQESE…KRAEDDEDGE (125 aa). Residues 162 to 186 are compositionally biased toward acidic residues; sequence DQESEAEDEVVAQESDGGDAGDDSD. The segment covering 193 to 207 has biased composition (low complexity); sequence EAAPKAVKSAPAKAA. A compositionally biased stretch (acidic residues) spans 209–235; that stretch reads ADDDDSDDSIDWDSDSESETESSDDEN. Positions 240-268 are enriched in basic and acidic residues; it reads MRERFLKRTTEKEEKDDDKRKDKRKEQKV. Positions 639 to 815 constitute a PCI domain; that stretch reads FHMHINLELL…ETVVMHRSEP (177 aa). The tract at residues 847–910 is disordered; it reads FFQRGNMGNR…QQQVQTIDEE (64 aa). Over residues 862–874 the composition is skewed to low complexity; it reads NRNQNNQGGNWLG. Positions 882–891 are enriched in basic residues; the sequence is RNRNQRGHHK. Low complexity predominate over residues 895-910; the sequence is DRQQQQQQQVQTIDEE.

The protein belongs to the eIF-3 subunit C family. As to quaternary structure, component of the eukaryotic translation initiation factor 3 (eIF-3) complex. The eIF-3 complex interacts with pix.

It localises to the cytoplasm. Functionally, component of the eukaryotic translation initiation factor 3 (eIF-3) complex, which is involved in protein synthesis of a specialized repertoire of mRNAs and, together with other initiation factors, stimulates binding of mRNA and methionyl-tRNAi to the 40S ribosome. The eIF-3 complex specifically targets and initiates translation of a subset of mRNAs involved in cell proliferation. The polypeptide is Eukaryotic translation initiation factor 3 subunit C (Drosophila yakuba (Fruit fly)).